The following is a 94-amino-acid chain: Cell division protein CrgA (94 aa).

A run of 2 helical transmembrane segments spans residues 31–51 and 71–91; these read VWFVALFVGLMLIGLIWLLVF and LGPWNYAIAFAFMITGLLLTM.

Belongs to the CrgA family.

The protein localises to the cell membrane. Involved in cell division. The polypeptide is Cell division protein CrgA (Mycobacterium sp. (strain JLS)).